A 249-amino-acid chain; its full sequence is Secretion system apparatus lipoprotein SsaJ (249 aa).

A signal peptide spans 1 to 18 (MKVHRIVFLTVLTFFLTA). Cysteine 19 carries N-palmitoyl cysteine lipidation. Residue cysteine 19 is the site of S-diacylglycerol cysteine attachment. The chain crosses the membrane as a helical span at residues 225 to 245 (LMLSLTGLLLGVGILIGYFCL).

This sequence belongs to the YscJ lipoprotein family.

The protein localises to the cell outer membrane. In terms of biological role, component of Salmonella pathogenicity island 2 (SPI-2) type III secretion system, required for secretion of some type III-secreted effectors including the SpvB exotoxin. The sequence is that of Secretion system apparatus lipoprotein SsaJ (ssaJ) from Salmonella typhimurium (strain 14028s / SGSC 2262).